Here is an 834-residue protein sequence, read N- to C-terminus: ATP-dependent DNA helicase fml1 (834 aa).

A Helicase ATP-binding domain is found at 80–248 (IVQKALFENV…NVIDSLHISR (169 aa)). 93–100 (LPTGLGKT) is a binding site for ATP. A DEAH box motif is present at residues 196–199 (DEAH). The Helicase C-terminal domain occupies 416–582 (HLERIVTEYF…GLSLSEKSYR (167 aa)). Residues 650–690 (EESPFEICPVTYSIEQEKKLEKYKRVCLRGLDIHRNRRLSQ) form an interaction with MHF complex region. The interval 738 to 769 (NSTDRDTKQPKMHDFRQPLHPNPMTTLKRKGQ) is disordered. Basic and acidic residues predominate over residues 740 to 754 (TDRDTKQPKMHDFRQ).

The protein belongs to the DEAD box helicase family. DEAH subfamily. FANCM sub-subfamily.

It localises to the cytoplasm. It is found in the nucleus. The protein localises to the nucleolus. It carries out the reaction ATP + H2O = ADP + phosphate + H(+). ATP-dependent DNA helicase involved in DNA damage repair by homologous recombination and in genome maintenance. Capable of unwinding D-loops. Plays a role in limiting crossover recombination during mitotic DNA double-strand break (DSB) repair. Component of a FANCM-MHF complex which promotes gene conversion at blocked replication forks, probably by reversal of the stalled fork. FANCM-MHF also promotes non-crossover recombination in meiotic cells. The chain is ATP-dependent DNA helicase fml1 from Schizosaccharomyces pombe (strain 972 / ATCC 24843) (Fission yeast).